An 81-amino-acid polypeptide reads, in one-letter code: Putative membrane protein insertion efficiency factor (81 aa).

This sequence belongs to the UPF0161 family.

The protein localises to the cell inner membrane. Functionally, could be involved in insertion of integral membrane proteins into the membrane. This is Putative membrane protein insertion efficiency factor from Thermotoga maritima (strain ATCC 43589 / DSM 3109 / JCM 10099 / NBRC 100826 / MSB8).